A 299-amino-acid chain; its full sequence is Peroxisomal biogenesis factor 19 (299 aa).

Residues 1–63 (MAAAEEGCSV…SPGDTAKDAL (63 aa)) form a disordered region. Residue Ala-2 is modified to N-acetylalanine. A docking to the peroxisome membrane and binding to PEX3 region spans residues 2 to 56 (AAAEEGCSVGAEADRELEELLESALDDFDKAKPSPAPPSTTTAPDASGPQKRSPG). The interval 2-91 (AAAEEGCSVG…QATAEFEKAM (90 aa)) is necessary for PEX19 function on peroxisome biogenesis. Residues 16–27 (RELEELLESALD) show a composition bias toward acidic residues. Phosphoserine occurs at positions 35, 54, and 66. Residue Thr-236 is modified to Phosphothreonine. Position 296 is a cysteine methyl ester (Cys-296). Residue Cys-296 is the site of S-farnesyl cysteine attachment. Positions 297–299 (LIM) are cleaved as a propeptide — removed in mature form.

It belongs to the peroxin-19 family. In terms of assembly, interacts with a broad range of peroxisomal membrane proteins, including PEX3, PEX10, PEX11A, PEX11B, PEX12, PEX13, PEX14 and PEX16, PXMP2/PMP22, PXMP4/PMP24, SLC25A17/PMP34, ABCD1/ALDP, ABCD2/ALDRP, and ABCD3/PMP70. Also interacts with the tumor suppressor CDKN2A/p19ARF. As to quaternary structure, (Microbial infection) Interacts with human cytomegalovirus protein UL37 isoform vMIA; this interaction inhibits the peroxisomal-dependent antiviral signaling. In terms of tissue distribution, ubiquitously expressed. Isoform 1 is strongly predominant in all tissues except in utero where isoform 2 is the main form.

It is found in the cytoplasm. The protein resides in the peroxisome membrane. In terms of biological role, necessary for early peroxisomal biogenesis. Acts both as a cytosolic chaperone and as an import receptor for peroxisomal membrane proteins (PMPs). Binds and stabilizes newly synthesized PMPs in the cytoplasm by interacting with their hydrophobic membrane-spanning domains, and targets them to the peroxisome membrane by binding to the integral membrane protein PEX3. Excludes CDKN2A from the nucleus and prevents its interaction with MDM2, which results in active degradation of TP53. This is Peroxisomal biogenesis factor 19 from Homo sapiens (Human).